Reading from the N-terminus, the 383-residue chain is Pantothenate kinase 1 (383 aa).

The protein belongs to the type II pantothenate kinase family. As to expression, highly expressed in leaves and developing seeds. Expressed in roots, stems and flowers.

It carries out the reaction (R)-pantothenate + ATP = (R)-4'-phosphopantothenate + ADP + H(+). Its pathway is cofactor biosynthesis; coenzyme A biosynthesis; CoA from (R)-pantothenate: step 1/5. Its activity is regulated as follows. Regulated by feedback inhibition by malonyl-CoA. Catalyzes the phosphorylation of pantothenate the first step in CoA biosynthesis. May play a role in the physiological regulation of the intracellular CoA concentration. Functionally redudant with PANK2. This chain is Pantothenate kinase 1 (PANK1), found in Arabidopsis thaliana (Mouse-ear cress).